The primary structure comprises 410 residues: UDP-N-acetylglucosamine--N-acetylmuramyl-(pentapeptide) pyrophosphoryl-undecaprenol N-acetylglucosamine transferase (410 aa).

Residues 1–34 form a disordered region; it reads MKDTVSQPAGGRGATAPRPADAASPSCGSSPSAD. The segment covering 14 to 34 has biased composition (low complexity); that stretch reads ATAPRPADAASPSCGSSPSAD. UDP-N-acetyl-alpha-D-glucosamine is bound by residues 45 to 47, asparagine 167, arginine 204, serine 238, and glutamine 334; that span reads TAG.

This sequence belongs to the glycosyltransferase 28 family. MurG subfamily.

The protein localises to the cell membrane. The catalysed reaction is di-trans,octa-cis-undecaprenyl diphospho-N-acetyl-alpha-D-muramoyl-L-alanyl-D-glutamyl-meso-2,6-diaminopimeloyl-D-alanyl-D-alanine + UDP-N-acetyl-alpha-D-glucosamine = di-trans,octa-cis-undecaprenyl diphospho-[N-acetyl-alpha-D-glucosaminyl-(1-&gt;4)]-N-acetyl-alpha-D-muramoyl-L-alanyl-D-glutamyl-meso-2,6-diaminopimeloyl-D-alanyl-D-alanine + UDP + H(+). Its pathway is cell wall biogenesis; peptidoglycan biosynthesis. Its function is as follows. Cell wall formation. Catalyzes the transfer of a GlcNAc subunit on undecaprenyl-pyrophosphoryl-MurNAc-pentapeptide (lipid intermediate I) to form undecaprenyl-pyrophosphoryl-MurNAc-(pentapeptide)GlcNAc (lipid intermediate II). This chain is UDP-N-acetylglucosamine--N-acetylmuramyl-(pentapeptide) pyrophosphoryl-undecaprenol N-acetylglucosamine transferase, found in Mycobacterium bovis (strain ATCC BAA-935 / AF2122/97).